Consider the following 417-residue polypeptide: NADH-quinone oxidoreductase subunit D (417 aa).

It belongs to the complex I 49 kDa subunit family. As to quaternary structure, NDH-1 is composed of 14 different subunits. Subunits NuoB, C, D, E, F, and G constitute the peripheral sector of the complex.

It localises to the cell inner membrane. The catalysed reaction is a quinone + NADH + 5 H(+)(in) = a quinol + NAD(+) + 4 H(+)(out). In terms of biological role, NDH-1 shuttles electrons from NADH, via FMN and iron-sulfur (Fe-S) centers, to quinones in the respiratory chain. The immediate electron acceptor for the enzyme in this species is believed to be ubiquinone. Couples the redox reaction to proton translocation (for every two electrons transferred, four hydrogen ions are translocated across the cytoplasmic membrane), and thus conserves the redox energy in a proton gradient. The chain is NADH-quinone oxidoreductase subunit D from Burkholderia ambifaria (strain MC40-6).